The primary structure comprises 456 residues: Zinc finger protein 25 (456 aa).

One can recognise a KRAB domain in the interval 8 to 79; that stretch reads VTLKDVIVEF…EVEFPHRGFP (72 aa). C2H2-type zinc fingers lie at residues 118–140, 146–168, 174–196, 202–224, 230–252, 258–280, 286–308, 314–336, 342–364, 370–392, 398–420, and 426–448; these read CECK…QHTH, YDCD…QKIH, YECK…LRTH, YECN…QKTH, FECT…QKTH, YECK…QRMH, YKCK…QRSH, YECK…QRTH, FECN…QRKH, YECT…QRTH, YACK…QRKH, and YECQ…QKTH.

The protein belongs to the krueppel C2H2-type zinc-finger protein family.

It localises to the nucleus. Its function is as follows. May be involved in transcriptional regulation. The chain is Zinc finger protein 25 (ZNF25) from Homo sapiens (Human).